The sequence spans 226 residues: ATP synthase F(0) complex subunit a (226 aa).

6 helical membrane passes run 6–26 (FASF…IIMF), 68–88 (WALM…LGLL), 97–117 (QLSM…ILGF), 138–158 (IPML…ALAV), 164–184 (ITAG…LMDI), and 189–209 (ATIT…VALI).

Belongs to the ATPase A chain family. Component of the ATP synthase complex composed at least of ATP5F1A/subunit alpha, ATP5F1B/subunit beta, ATP5MC1/subunit c (homooctomer), MT-ATP6/subunit a, MT-ATP8/subunit 8, ATP5ME/subunit e, ATP5MF/subunit f, ATP5MG/subunit g, ATP5MK/subunit k, ATP5MJ/subunit j, ATP5F1C/subunit gamma, ATP5F1D/subunit delta, ATP5F1E/subunit epsilon, ATP5PF/subunit F6, ATP5PB/subunit b, ATP5PD/subunit d, ATP5PO/subunit OSCP. ATP synthase complex consists of a soluble F(1) head domain (subunits alpha(3) and beta(3)) - the catalytic core - and a membrane F(0) domain - the membrane proton channel (subunits c, a, 8, e, f, g, k and j). These two domains are linked by a central stalk (subunits gamma, delta, and epsilon) rotating inside the F1 region and a stationary peripheral stalk (subunits F6, b, d, and OSCP). Interacts with DNAJC30; interaction is direct.

Its subcellular location is the mitochondrion inner membrane. The catalysed reaction is H(+)(in) = H(+)(out). In terms of biological role, subunit a, of the mitochondrial membrane ATP synthase complex (F(1)F(0) ATP synthase or Complex V) that produces ATP from ADP in the presence of a proton gradient across the membrane which is generated by electron transport complexes of the respiratory chain. ATP synthase complex consist of a soluble F(1) head domain - the catalytic core - and a membrane F(1) domain - the membrane proton channel. These two domains are linked by a central stalk rotating inside the F(1) region and a stationary peripheral stalk. During catalysis, ATP synthesis in the catalytic domain of F(1) is coupled via a rotary mechanism of the central stalk subunits to proton translocation. With the subunit c (ATP5MC1), forms the proton-conducting channel in the F(0) domain, that contains two crucial half-channels (inlet and outlet) that facilitate proton movement from the mitochondrial intermembrane space (IMS) into the matrix. Protons are taken up via the inlet half-channel and released through the outlet half-channel, following a Grotthuss mechanism. The sequence is that of ATP synthase F(0) complex subunit a from Rattus norvegicus (Rat).